The chain runs to 74 residues: Sodium channel neurotoxin MeuNaTxalpha-6 (74 aa).

An N-terminal signal peptide occupies residues Leu-1–Ser-7. In terms of domain architecture, LCN-type CS-alpha/beta spans Arg-9 to His-73. 4 disulfide bridges follow: Cys-19–Cys-72, Cys-23–Cys-45, Cys-31–Cys-55, and Cys-35–Cys-57. Position 74 (Arg-74) is a propeptide, removed by a carboxypeptidase.

The protein belongs to the long (4 C-C) scorpion toxin superfamily. Sodium channel inhibitor family. Alpha subfamily. As to expression, expressed by the venom gland.

The protein localises to the secreted. In terms of biological role, alpha toxins bind voltage-independently at site-3 of sodium channels (Nav) and inhibit the inactivation of the activated channels, thereby blocking neuronal transmission. In Mesobuthus eupeus (Lesser Asian scorpion), this protein is Sodium channel neurotoxin MeuNaTxalpha-6.